We begin with the raw amino-acid sequence, 199 residues long: Imidazole glycerol phosphate synthase subunit HisH (199 aa).

In terms of domain architecture, Glutamine amidotransferase type-1 spans 2-199; sequence RAVIIDYGVG…LTNVYRWLRK (198 aa). C76 acts as the Nucleophile in catalysis. Active-site residues include H178 and E180.

As to quaternary structure, heterodimer of HisH and HisF.

The protein resides in the cytoplasm. It carries out the reaction 5-[(5-phospho-1-deoxy-D-ribulos-1-ylimino)methylamino]-1-(5-phospho-beta-D-ribosyl)imidazole-4-carboxamide + L-glutamine = D-erythro-1-(imidazol-4-yl)glycerol 3-phosphate + 5-amino-1-(5-phospho-beta-D-ribosyl)imidazole-4-carboxamide + L-glutamate + H(+). The enzyme catalyses L-glutamine + H2O = L-glutamate + NH4(+). Its pathway is amino-acid biosynthesis; L-histidine biosynthesis; L-histidine from 5-phospho-alpha-D-ribose 1-diphosphate: step 5/9. IGPS catalyzes the conversion of PRFAR and glutamine to IGP, AICAR and glutamate. The HisH subunit catalyzes the hydrolysis of glutamine to glutamate and ammonia as part of the synthesis of IGP and AICAR. The resulting ammonia molecule is channeled to the active site of HisF. This Sulfolobus acidocaldarius (strain ATCC 33909 / DSM 639 / JCM 8929 / NBRC 15157 / NCIMB 11770) protein is Imidazole glycerol phosphate synthase subunit HisH.